The primary structure comprises 58 residues: 6.8 kDa protein (58 aa).

The chain is 6.8 kDa protein from Satellite tobacco mosaic virus (STMV).